A 338-amino-acid chain; its full sequence is Solute carrier family 35 member G5 (338 aa).

The segment at 1-28 (MAGSHPYFNLPDSTHPSPPSGPPSLRWH) is disordered. Helical transmembrane passes span 37 to 57 (TNGLLVALLGGGLPAGFVGPL), 67 to 87 (LPSLELLICRCLFHLPIALLL), 105 to 125 (CFCALLNVLSIGCAYSAVQVV), 160 to 180 (CGLLGSILGLIIIVGPGLWTL), 190 to 210 (ALGYVQAFLGGLALSLGLLVY), 221 to 241 (TVAFLSGLVGLLGSVPGLFVL), 250 to 270 (LLSWSCVGAVGILTLVSFTCV), 281 to 301 (LVCAVLHSEVVVALILQYYML), and 310 to 330 (IMGAGVVLGNITIIPAWNLSC). The EamA 1 domain maps to 49 to 174 (LPAGFVGPLS…SILGLIIIVG (126 aa)). One can recognise an EamA 2 domain in the interval 272 to 325 (YAVTKAHPALVCAVLHSEVVVALILQYYMLPETVAPSDIMGAGVVLGNITIIPA).

This sequence belongs to the SLC35G solute transporter family.

It localises to the membrane. The polypeptide is Solute carrier family 35 member G5 (SLC35G5) (Gorilla gorilla gorilla (Western lowland gorilla)).